We begin with the raw amino-acid sequence, 337 residues long: Cytoskeleton protein RodZ (337 aa).

At 1 to 111 (MNTEATHDQN…LGKRRKKRDG (111 aa)) the chain is on the cytoplasmic side. Positions 19–71 (LRNAREQLGLSQQAVAERLCLKVSTVRDIEEDKAPADLASTFLRGYIRSYARL) constitute an HTH cro/C1-type domain. A DNA-binding region (H-T-H motif) is located at residues 30 to 49 (QQAVAERLCLKVSTVRDIEE). A helical; Signal-anchor for type II membrane protein transmembrane segment spans residues 112-132 (WLMTFTWLVLFVVIGLSGAWW). The Periplasmic segment spans residues 133 to 337 (WQDHKAQQEE…TLNAEQSPAQ (205 aa)). The segment covering 145–167 (TMADQSSAELSSNSEQGQSVPLN) has biased composition (polar residues). A disordered region spans residues 145–236 (TMADQSSAEL…TAATTPDGAA (92 aa)). Over residues 168-207 (TSTTTDPATTSTPPASVDTTATNTQTPAVTAPAPAVDPQQ) the composition is skewed to low complexity. Positions 208-218 (NAVVSPSQANV) are enriched in polar residues. The span at 219 to 236 (DTAATPAPTAATTPDGAA) shows a compositional bias: low complexity.

Belongs to the RodZ family.

The protein localises to the cell inner membrane. Cytoskeletal protein that is involved in cell-shape control through regulation of the length of the long axis. The chain is Cytoskeleton protein RodZ from Escherichia coli O9:H4 (strain HS).